The chain runs to 715 residues: 1,4-alpha-glucan branching enzyme GlgB (715 aa).

The active-site Nucleophile is the aspartate 396. Glutamate 449 serves as the catalytic Proton donor.

Belongs to the glycosyl hydrolase 13 family. GlgB subfamily. As to quaternary structure, monomer.

It catalyses the reaction Transfers a segment of a (1-&gt;4)-alpha-D-glucan chain to a primary hydroxy group in a similar glucan chain.. Its pathway is glycan biosynthesis; glycogen biosynthesis. Catalyzes the formation of the alpha-1,6-glucosidic linkages in glycogen by scission of a 1,4-alpha-linked oligosaccharide from growing alpha-1,4-glucan chains and the subsequent attachment of the oligosaccharide to the alpha-1,6 position. The sequence is that of 1,4-alpha-glucan branching enzyme GlgB from Vibrio vulnificus (strain YJ016).